Here is a 997-residue protein sequence, read N- to C-terminus: LPS-assembly protein LptD (997 aa).

The signal sequence occupies residues 1–27; that stretch reads MLYSPLYQSIRLILFGALGLSSLTVSA.

The protein belongs to the LptD family. In terms of assembly, component of the lipopolysaccharide transport and assembly complex. Interacts with LptE and LptA.

The protein resides in the cell outer membrane. Functionally, together with LptE, is involved in the assembly of lipopolysaccharide (LPS) at the surface of the outer membrane. The protein is LPS-assembly protein LptD of Psychrobacter cryohalolentis (strain ATCC BAA-1226 / DSM 17306 / VKM B-2378 / K5).